We begin with the raw amino-acid sequence, 170 residues long: Alpha-crystallin A chain (170 aa).

Met1 is subject to N-acetylmethionine. The segment at 1–63 (MDVTIQHPWF…RTALDSGISE (63 aa)) is required for complex formation with BFSP1 and BFSP2. Gln6 is modified (deamidated glutamine; partial). The residue at position 45 (Ser45) is a Phosphoserine. Gln50 carries the deamidated glutamine; partial modification. Positions 52–161 (LFRTALDSGI…GERTIPVSRE (110 aa)) constitute a sHSP domain. An N6-acetyllysine modification is found at Lys99. Residue His100 coordinates Zn(2+). At Asn101 the chain carries Deamidated asparagine; partial. 3 residues coordinate Zn(2+): Glu102, His107, and His151. The disordered stretch occupies residues 144-170 (PKLVDPSHGERTIPVSREEKPSSAPSS). Residues 148-164 (DPSHGERTIPVSREEKP) are compositionally biased toward basic and acidic residues. Ser159 is a glycosylation site (O-linked (GlcNAc) serine).

The protein belongs to the small heat shock protein (HSP20) family. Heteromer composed of three CRYAA and one CRYAB subunits. Inter-subunit bridging via zinc ions enhances stability, which is crucial as there is no protein turn over in the lens. Can also form homodimers and homotetramers (dimers of dimers) which serve as the building blocks of homooligomers. Within homooligomers, the zinc-binding motif is created from residues of 3 different molecules. His-100 and Glu-102 from one molecule are ligands of the zinc ion, and His-107 and His-151 residues from additional molecules complete the site with tetrahedral coordination geometry. Part of a complex required for lens intermediate filament formation composed of BFSP1, BFSP2 and CRYAA. In terms of processing, acetylation at Lys-99 may increase chaperone activity. Undergoes age-dependent proteolytical cleavage at the C-terminus.

The protein resides in the cytoplasm. Its subcellular location is the nucleus. In terms of biological role, contributes to the transparency and refractive index of the lens. Acts as a chaperone, preventing aggregation of various proteins under a wide range of stress conditions. Required for the correct formation of lens intermediate filaments as part of a complex composed of BFSP1, BFSP2 and CRYAA. The polypeptide is Alpha-crystallin A chain (CRYAA) (Tamandua mexicana (Northern Tamandua)).